The chain runs to 149 residues: 3-hydroxyacyl-[acyl-carrier-protein] dehydratase FabZ (149 aa).

Residue His52 is part of the active site.

Belongs to the thioester dehydratase family. FabZ subfamily.

The protein localises to the cytoplasm. The enzyme catalyses a (3R)-hydroxyacyl-[ACP] = a (2E)-enoyl-[ACP] + H2O. Functionally, involved in unsaturated fatty acids biosynthesis. Catalyzes the dehydration of short chain beta-hydroxyacyl-ACPs and long chain saturated and unsaturated beta-hydroxyacyl-ACPs. This chain is 3-hydroxyacyl-[acyl-carrier-protein] dehydratase FabZ, found in Cupriavidus necator (strain ATCC 17699 / DSM 428 / KCTC 22496 / NCIMB 10442 / H16 / Stanier 337) (Ralstonia eutropha).